Reading from the N-terminus, the 387-residue chain is MASVTITSVHEPTNPLAVAHTGEREVEGDQLIKTDTNNDNDIINTLLNNFLYPQELKHNVFVPRFQQRITIVKAWDILSLSTSPPNGTNGANGTNSAPHRPKDLHILDIGCGQGESAVTMAALLQPHMHGARLHITGIDTARPDYGTPYTVAETHAHLTASALGRHISFRREDAAAFFSPSRLSSPSPPGSWPSAANVDAVTLCHSLWYFPTPQSVADLFTTLAGARVPRVYLAEYSFRGSLPGGQQDAHILAARAQALLHASVLEKLSADSSQQNHQGREPRPRAPNVRAALDVGSIVEAAAAAGWAVRRQGTFVPAADMIEGHLEARLVVKDAFAEAVRAEGLSPEREHEVLGLVPGVKKAFARLAAAGVAKGRAMDVWWAELER.

The methyltransferase domain stretch occupies residues 98–223; sequence PHRPKDLHIL…QSVADLFTTL (126 aa).

The protein belongs to the class I-like SAM-binding methyltransferase superfamily. Erg6/SMT family.

It functions in the pathway mycotoxin biosynthesis. Its function is as follows. Methyltransferase; part of the gene cluster that mediates the biosynthesis of the phomopsins, a group of hexapeptide mycotoxins which infects lupins and causes lupinosis disease in livestock. Within the pathway, phomM acts as an S-adenosylmethionine-dependent alpha-N-methyltransferase that catalyzes two successive N-methylation reactions, converting N-desmethyl-phomopsin A to phomopsin A and phomopsin A further to an N,N-dimethylated congener called phomopsin E. The pathway starts with the processing of the precursor phomA by several endopeptidases including kexin proteases as well as the cluster-specific S41 family peptidase phomP1 and the oligopeptidase phomG to produce 10 identical copies of the hexapeptide Tyr-Val-Ile-Pro-Ile-Asp. After being excised from the precursor peptide, the core peptides are cyclized and modified post-translationally by enzymes encoded within the gene cluster. The timing and order of proteolysis of the phomA precursor and PTMs are still unknown. Two tyrosinase-like enzymes, phomQ1 and phomQ2, catalyze the chlorination and hydroxylation of Tyr, respectively. PhomYb, is proposed to be involved in the construction of the macrocyclic structure. The other 4 ustYa family proteins may be involved in PTMs that generate the unique structure of phomopsin A. PhomYa is required for the hydroxylation of C-beta of Tyr. PhomYc, phomYd, and phomYe are responsible for the biosynthesis of 2,3-dehydroisoleucine (dIle), 2,3-dehydroaspartic acid (dAsp), and 3,4-dehydroproline (dPro), respectively. While dIle formation by phomYc is indispensable for the installation of dAsp by phomYd, the order of the other PTMs have not been elucidated yet. Most of the biosynthetic enzymes likely have broad substrate specificity, and thus, there might be a metabolic grid from a precursor to phomopsin A. The enzyme(s) responsible for the biosynthesis of 3,4-dehydrovaline (dVal) have also not been identified yet. Finally, phomM acts as an S-adenosylmethionine-dependent alpha-N-methyltransferase that catalyzes two successive N-methylation reactions, converting N-desmethyl-phomopsin A to phomopsin A and phomopsin A further to an N,N-dimethylated congener called phomopsin E. The sequence is that of Methyltransferase phomM from Diaporthe leptostromiformis (Lupinosis disease fungus).